Here is a 333-residue protein sequence, read N- to C-terminus: Potassium channel protein 1 (333 aa).

At 1 to 6 the chain is on the cytoplasmic side; it reads METYEK. The chain crosses the membrane as a helical span at residues 7–27; the sequence is IELGIIVIILLILIESVILMT. At 28–60 the chain is on the extracellular side; that stretch reads VEGWDFFTAFYTAVVTISTVGYGDYTPQTFLGK. The short motif at 46–51 is the Selectivity filter element; it reads TVGYGD. Residues 61–81 traverse the membrane as a helical segment; sequence LSVIIYIFAGVGAVAYTMGNI. Topologically, residues 82 to 333 are cytoplasmic; sequence ASFFIEGHFR…KLKRYVEGVE (252 aa). Residues 107-229 form the RCK N-terminal domain; sequence NNHYIICGYG…GADRAVCPYI (123 aa). The 86-residue stretch at 246–331 folds into the RCK C-terminal domain; that stretch reads EFIHSLVATE…LEKLKRYVEG (86 aa).

In terms of assembly, homotetramer.

The protein resides in the cell membrane. In terms of biological role, potassium channel protein. Seems to conduct potassium at low membrane potentials. This is Potassium channel protein 1 from Methanocaldococcus jannaschii (strain ATCC 43067 / DSM 2661 / JAL-1 / JCM 10045 / NBRC 100440) (Methanococcus jannaschii).